The following is a 423-amino-acid chain: UPF0229 protein PST_0721 (423 aa).

Positions 84–109 (AGERIPRPQGGGGGQGAGQASNSGEG) are disordered.

The protein belongs to the UPF0229 family.

This Stutzerimonas stutzeri (strain A1501) (Pseudomonas stutzeri) protein is UPF0229 protein PST_0721.